The chain runs to 512 residues: Maturase K (512 aa).

The protein belongs to the intron maturase 2 family. MatK subfamily.

The protein resides in the plastid. Its subcellular location is the chloroplast. In terms of biological role, usually encoded in the trnK tRNA gene intron. Probably assists in splicing its own and other chloroplast group II introns. The polypeptide is Maturase K (Acer campestre (Field maple)).